A 503-amino-acid chain; its full sequence is AMP phosphorylase (503 aa).

Residues Gly-168, 194–199 (SRAITS), and Thr-203 each bind AMP. Asp-256 acts as the Proton donor in catalysis. Positions 264 and 288 each coordinate AMP.

This sequence belongs to the thymidine/pyrimidine-nucleoside phosphorylase family. Type 2 subfamily. As to quaternary structure, forms an exceptionally large macromolecular structure (&gt;40-mers) in solution.

It catalyses the reaction AMP + phosphate = alpha-D-ribose 1,5-bisphosphate + adenine. It carries out the reaction CMP + phosphate = cytosine + alpha-D-ribose 1,5-bisphosphate. The catalysed reaction is UMP + phosphate = alpha-D-ribose 1,5-bisphosphate + uracil. With respect to regulation, AMP phosphorolysis is allosterically regulated by the substrate AMP. In terms of biological role, catalyzes the conversion of AMP and phosphate to adenine and ribose 1,5-bisphosphate (R15P). Exhibits phosphorylase activity toward CMP, dCMP and UMP in addition to AMP. Functions in an archaeal AMP degradation pathway, together with R15P isomerase and RubisCO. The polypeptide is AMP phosphorylase (Thermococcus kodakarensis (strain ATCC BAA-918 / JCM 12380 / KOD1) (Pyrococcus kodakaraensis (strain KOD1))).